The primary structure comprises 401 residues: Nodulation protein E (401 aa).

Positions 2–400 (DRRVVITGIG…GTNAVLAFRQ (399 aa)) constitute a Ketosynthase family 3 (KS3) domain. Catalysis depends on for beta-ketoacyl synthase activity residues C162, H294, and H331. A helical transmembrane segment spans residues 329-348 (HAHCLGAASALEMIACVMAI).

This sequence belongs to the thiolase-like superfamily. Beta-ketoacyl-ACP synthases family.

The protein localises to the cell inner membrane. Functionally, proposed to synthesize NOD factor fatty acyl chain. Involved in the synthesis of a highly unsaturated fatty acid moiety, which forms part of a lipo-oligosaccharide that is responsible for host specificity. This is Nodulation protein E (nodE) from Rhizobium leguminosarum bv. trifolii.